Consider the following 409-residue polypeptide: Lysosome-associated membrane glycoprotein 1 (409 aa).

Residues M1 to S25 form the signal peptide. The segment at A26–C187 is first lumenal domain. Residues A26–M374 are Lumenal-facing. N34, N59, N72, N80, N103, N117, N126, N146, N161, and N179 each carry an N-linked (GlcNAc...) asparagine glycan. Cysteines 38 and 76 form a disulfide. C151 and C187 are oxidised to a cystine. Positions F180–A207 are disordered. The segment at E188–S219 is hinge. Residues P194–A207 are compositionally biased toward pro residues. 8 N-linked (GlcNAc...) asparagine glycosylation sites follow: N215, N220, N241, N253, N260, N285, N299, and N314. The segment at N220–M374 is second lumenal domain. C223 and C261 are oxidised to a cystine. An intrachain disulfide couples C330 to C367. Residues L375–G398 form a helical membrane-spanning segment. The Cytoplasmic segment spans residues R399–I409.

This sequence belongs to the LAMP family. As to quaternary structure, interacts with ABCB9; this interaction strongly stabilizes ABCB9 and protects ABCB9 against lysosomal degradation. Interacts with FURIN. Interacts with TMEM175; inhibiting the proton channel activity of TMEM175. In terms of processing, O- and N-glycosylated; some of the N-glycans attached to LAMP-1 are polylactosaminoglycans.

The protein resides in the lysosome membrane. Its subcellular location is the endosome membrane. It is found in the late endosome membrane. The protein localises to the cell membrane. It localises to the cytolytic granule membrane. In terms of biological role, lysosomal membrane glycoprotein which plays an important role in lysosome biogenesis, lysosomal pH regulation, autophagy and cholesterol homeostasis. Acts as an important regulator of lysosomal lumen pH regulation by acting as a direct inhibitor of the proton channel TMEM175, facilitating lysosomal acidification for optimal hydrolase activity. Also plays an important role in NK-cells cytotoxicity. Mechanistically, participates in cytotoxic granule movement to the cell surface and perforin trafficking to the lytic granule. In addition, protects NK-cells from degranulation-associated damage induced by their own cytotoxic granule content. Presents carbohydrate ligands to selectins. This Bos taurus (Bovine) protein is Lysosome-associated membrane glycoprotein 1 (LAMP1).